A 206-amino-acid chain; its full sequence is Large ribosomal subunit protein uL4 (206 aa).

Positions 45-78 (QGNRAQKDREQVKHTTKKPWRQKGTGRARAGMSS) are disordered. The span at 58–70 (HTTKKPWRQKGTG) shows a compositional bias: basic residues.

The protein belongs to the universal ribosomal protein uL4 family. Part of the 50S ribosomal subunit.

Its function is as follows. One of the primary rRNA binding proteins, this protein initially binds near the 5'-end of the 23S rRNA. It is important during the early stages of 50S assembly. It makes multiple contacts with different domains of the 23S rRNA in the assembled 50S subunit and ribosome. In terms of biological role, forms part of the polypeptide exit tunnel. The sequence is that of Large ribosomal subunit protein uL4 from Burkholderia ambifaria (strain MC40-6).